The following is a 309-amino-acid chain: NAD kinase (309 aa).

Asp-89 acts as the Proton acceptor in catalysis. Residues 89–90, 163–164, His-174, Arg-191, Asp-193, and 204–209 each bind NAD(+); these read DG, NE, and TAYALS.

The protein belongs to the NAD kinase family. A divalent metal cation is required as a cofactor.

It localises to the cytoplasm. It carries out the reaction NAD(+) + ATP = ADP + NADP(+) + H(+). Involved in the regulation of the intracellular balance of NAD and NADP, and is a key enzyme in the biosynthesis of NADP. Catalyzes specifically the phosphorylation on 2'-hydroxyl of the adenosine moiety of NAD to yield NADP. In Shewanella sp. (strain W3-18-1), this protein is NAD kinase.